Here is a 525-residue protein sequence, read N- to C-terminus: MATLLRSLALFKRNKDKPPITSGSGGAIRGIKHIIIVPIPGDSSITTRSRLLDRLVRLIGNPDVSGPKLTGALIGILSLFVESPGQLIQRITDDPDVSIRLLEVVQSDQSQSGLTFASRGTNMEDEADKYFSHDDPISSDQSRFGWFENKEISDIEVQDPEGFNMILGTILAQIWVLLAKAVTAPDTAADSELRRWIKYTQQRRVVGEFRLERKWLDVVRNRIAEDLSLRRFMVALILDIKRTPGNKPRIAEMICDIDTYIVEAGLASFILTIKFGIETMYPALGLHEFAGELSTLESLMNLYQQMGETAPYMVNLENSIQNKFSAGSYPLLWSYAMGVGVELENSMGGLNFGRSYFDPAYFRLGQEMVRRSAGKVSSTLASELGITAEDARLVSEIAMHTTEDKISRAVGPRQAQVSFLHGDQSENELPRLGGKEDRRVKQSRGEARESYRETGPSRASDARAAHLPTGTPLDIDTASESSQDPQDSRRSADALLRLQAMAGISEEQGSDTDTPIVYNDRNLLD.

The interval 1-36 (MATLLRSLALFKRNKDKPPITSGSGGAIRGIKHIII) is homomultimerization. An RNA packaging and organization of the helical nucleocapsid region spans residues 1-375 (MATLLRSLAL…QEMVRRSAGK (375 aa)). The tract at residues 1–403 (MATLLRSLAL…VSEIAMHTTE (403 aa)) is ncore. Residues 70–77 (TGALIGIL) carry the Nuclear localization signal motif. Positions 180, 195, 202, and 260 each coordinate RNA. The residue at position 279 (threonine 279) is a Phosphothreonine; by host. Residue asparagine 351 participates in RNA binding. The homomultimerization stretch occupies residues 373–391 (AGKVSSTLASELGITAEDA). The interval 404 to 525 (DKISRAVGPR…IVYNDRNLLD (122 aa)) is ntail. A disordered region spans residues 418 to 525 (SFLHGDQSEN…IVYNDRNLLD (108 aa)). Residues 425–440 (SENELPRLGGKEDRRV) carry the Nuclear export signal motif. Residues 433–452 (GGKEDRRVKQSRGEARESYR) show a composition bias toward basic and acidic residues. The segment at 477–505 (TASESSQDPQDSRRSADALLRLQAMAGIS) is interaction with the phosphoprotein.

Belongs to the paramyxoviruses nucleocapsid family. In terms of assembly, homomultimer; forms the nucleocapsid. Binds to viral genomic RNA. N0 interacts (via Ncore) with the phosphoprotein (via N-terminus); this interaction allows P to chaperon N0 to avoid N polymerization and non-specific RNA binding before encapsidation. Interacts (via the Ntail) as N-RNA template with the phosphoprotein (via C-terminus XD); this interaction maintains the P/L complex anchored to the nucleocapsid template during the sequential transcription. Interacts with the phosphoprotein; this interaction leads to the formation of membraneless organelles that function as viral replication factories. Interacts with human FCGR2B protein. Interacts with human PPIA/CYPA and PPIB/CYPB. Phosphorylation at Thr-279 is required for the formation of the nucleocapsid.

It is found in the virion. Its subcellular location is the host cytoplasm. It localises to the host nucleus. Its function is as follows. Forms the helical nucleocapsid (NC) in a ratio of 1 N per 6 ribonucleotides, protecting the genome from nucleases. The nucleocapsid (NC) has a helical structure with either 12.35 or 11.64 N per turn, approximately 20 nm in diameter, with a hollow central cavity approximately 5 nm in diameter. The encapsidated genomic RNA serves as template for transcription and replication; encapsidation by N is coupled to RNA synthesis. Forms the encapsidation complex with the phosphoprotein protein P. Before encapsidation, the newly synthesized free N protein, so-called N0, is chaperoned by P. Participates, together with P, in the formation of viral factories (viroplasms), which are large inclusions in the host cytoplasm where replication takes place. N is released in the blood following lysis of measles infected cells, it interacts then with human FCGR2B on immune cells, inducing apoptosis and blocking inflammatory immune response. The polypeptide is Nucleoprotein (N) (Homo sapiens (Human)).